A 496-amino-acid polypeptide reads, in one-letter code: Ganglioside-induced differentiation-associated protein 2 (496 aa).

The interval 25–48 (EEGEDVPDGGRKDVPDGGSHSPFP) is disordered. Positions 44-224 (HSPFPYRKDI…TYRRLLPLYF (181 aa)) constitute a Macro domain. One can recognise a CRAL-TRIO domain in the interval 329-483 (DLSDIAALKA…FVLDYDAREN (155 aa)).

The protein belongs to the GDAP2 family.

The protein is Ganglioside-induced differentiation-associated protein 2 of Xenopus laevis (African clawed frog).